We begin with the raw amino-acid sequence, 499 residues long: Fumarate hydratase 2 (499 aa).

The tract at residues 19-51 is disordered; the sequence is ADVTLKQEDEQQERRSYSTPFREERDTFGPIQV. The span at 23–45 shows a compositional bias: basic and acidic residues; that stretch reads LKQEDEQQERRSYSTPFREERDT. Residues 134 to 136, 164 to 167, 174 to 176, and Thr-222 each bind substrate; these read SGT, HPND, and SSN. His-223 (proton donor/acceptor) is an active-site residue. Ser-353 is an active-site residue. Substrate is bound by residues Ser-354 and 359–361; that span reads KVN.

This sequence belongs to the class-II fumarase/aspartase family. Fumarase subfamily. Homotetramer.

Its subcellular location is the cytoplasm. The protein resides in the cytosol. The enzyme catalyses (S)-malate = fumarate + H2O. With respect to regulation, fumarate hydratase activity (fumarate to L-malate) is strongly inhibited by phosphoenolpyruvate, citrate, oxaloacetate, ATP and ADP. Malate dehydratase activity (malate to fumarate) is activated by oxaloacetate, Asn and Gln. Malate dehydratase activity (malate to fumarate) is inhibited by citrate, succinate, ADP and ATP. Cytosolic fumarate hydratase that catalyzes the reversible stereospecific interconversion of fumarate to L-malate. Catalyzes the dehydration of L-malate to fumarate in the cytosol: required for the massive fumarate accumulation during the day in plants grown under high nitrogen. Also required for acclimation of photosynthesis to cold: acts by mediating accumulation of fumarate at low temperature, leading to reduce accumulation of phosphorylated sugars. This chain is Fumarate hydratase 2, found in Arabidopsis thaliana (Mouse-ear cress).